Consider the following 196-residue polypeptide: Ribonuclease HII (196 aa).

Positions 9–196 (RLVAGVDEVG…KPVRRALGIE (188 aa)) constitute an RNase H type-2 domain. A divalent metal cation-binding residues include aspartate 15, glutamate 16, and aspartate 107.

Belongs to the RNase HII family. Mn(2+) is required as a cofactor. The cofactor is Mg(2+).

It is found in the cytoplasm. It carries out the reaction Endonucleolytic cleavage to 5'-phosphomonoester.. Endonuclease that specifically degrades the RNA of RNA-DNA hybrids. The chain is Ribonuclease HII from Aeromonas hydrophila subsp. hydrophila (strain ATCC 7966 / DSM 30187 / BCRC 13018 / CCUG 14551 / JCM 1027 / KCTC 2358 / NCIMB 9240 / NCTC 8049).